The chain runs to 186 residues: Lipid A palmitoyltransferase PagP (186 aa).

A signal peptide spans methionine 1 to alanine 25. Active-site residues include histidine 58, aspartate 101, and serine 102.

It belongs to the lipid A palmitoyltransferase family. As to quaternary structure, homodimer.

The protein resides in the cell outer membrane. It carries out the reaction lipid A (E. coli) + a 1-hexadecanoyl-2-acyl-sn-glycero-3-phosphocholine = hepta-acyl lipid A (E. coli) + a 2-acyl-sn-glycero-3-phosphocholine. The catalysed reaction is lipid IIA + a 1-hexadecanoyl-2-acyl-sn-glycero-3-phosphocholine = lipid IIB + a 2-acyl-sn-glycero-3-phosphocholine. The enzyme catalyses lipid IVA (E. coli) + a 1-hexadecanoyl-2-acyl-sn-glycero-3-phosphocholine = lipid IVB (E. coli) + a 2-acyl-sn-glycero-3-phosphocholine. Its function is as follows. Transfers a palmitate residue from the sn-1 position of a phospholipid to the N-linked hydroxymyristate on the proximal unit of lipid A or its precursors. The polypeptide is Lipid A palmitoyltransferase PagP (Escherichia coli O6:K15:H31 (strain 536 / UPEC)).